The sequence spans 502 residues: Betaine aldehyde dehydrogenase, chloroplastic (502 aa).

A chloroplast-targeting transit peptide spans 1 to 7 (MAFPIPA). An NAD(+)-binding site is contributed by 240-245 (GSSATG). Residue glutamate 262 is the Proton acceptor of the active site. The active-site Nucleophile is cysteine 296.

Belongs to the aldehyde dehydrogenase family. Homodimer.

Its subcellular location is the plastid. The protein resides in the chloroplast. The enzyme catalyses betaine aldehyde + NAD(+) + H2O = glycine betaine + NADH + 2 H(+). Its pathway is amine and polyamine biosynthesis; betaine biosynthesis via choline pathway; betaine from betaine aldehyde: step 1/1. This Atriplex hortensis (Mountain spinach) protein is Betaine aldehyde dehydrogenase, chloroplastic.